A 58-amino-acid chain; its full sequence is UPF0434 protein Swoo_1821 (58 aa).

This sequence belongs to the UPF0434 family.

The polypeptide is UPF0434 protein Swoo_1821 (Shewanella woodyi (strain ATCC 51908 / MS32)).